The primary structure comprises 478 residues: ATP synthase subunit beta (478 aa).

152 to 159 (GGAGVGKT) contacts ATP.

The protein belongs to the ATPase alpha/beta chains family. In terms of assembly, F-type ATPases have 2 components, CF(1) - the catalytic core - and CF(0) - the membrane proton channel. CF(1) has five subunits: alpha(3), beta(3), gamma(1), delta(1), epsilon(1). CF(0) has three main subunits: a(1), b(2) and c(9-12). The alpha and beta chains form an alternating ring which encloses part of the gamma chain. CF(1) is attached to CF(0) by a central stalk formed by the gamma and epsilon chains, while a peripheral stalk is formed by the delta and b chains.

It localises to the cell membrane. It catalyses the reaction ATP + H2O + 4 H(+)(in) = ADP + phosphate + 5 H(+)(out). Its function is as follows. Produces ATP from ADP in the presence of a proton gradient across the membrane. The catalytic sites are hosted primarily by the beta subunits. In Wolbachia pipientis subsp. Culex pipiens (strain wPip), this protein is ATP synthase subunit beta.